The primary structure comprises 320 residues: MPQQSRSAAEIYHQPLMDLLFQAQTVHRAHFDPNVVQCSKLLSIKTGGCPEDCAYCSQSARNGSELSASKLMEVQRVLAEARRAKEAGATRYCMGAAWRSPKERDMPAVLAMIRGVKAMGMETCMTLGMLDADQALRLKDAGLDYYNHNIDTSERYYSEIITTRTFQDRIETLERVQAAGINVCAGGIVGMGETAEDRISMLETLAGLEVPPQSVPINMLMPMAGTPLADVPRLDAIEMVRTIATARILMPASYVRLSAGRSEMSDEMQAMCFFAGANSIFVGDTLLTAGNPDEDKDALLFAKLGLRAEVPEASQEGCAA.

Residues 34 to 261 enclose the Radical SAM core domain; that stretch reads NVVQCSKLLS…ASYVRLSAGR (228 aa). Residues Cys-49, Cys-53, and Cys-56 each coordinate [4Fe-4S] cluster. Cys-93, Cys-124, Cys-184, and Arg-256 together coordinate [2Fe-2S] cluster.

The protein belongs to the radical SAM superfamily. Biotin synthase family. In terms of assembly, homodimer. [4Fe-4S] cluster serves as cofactor. It depends on [2Fe-2S] cluster as a cofactor.

It catalyses the reaction (4R,5S)-dethiobiotin + (sulfur carrier)-SH + 2 reduced [2Fe-2S]-[ferredoxin] + 2 S-adenosyl-L-methionine = (sulfur carrier)-H + biotin + 2 5'-deoxyadenosine + 2 L-methionine + 2 oxidized [2Fe-2S]-[ferredoxin]. It participates in cofactor biosynthesis; biotin biosynthesis; biotin from 7,8-diaminononanoate: step 2/2. Its function is as follows. Catalyzes the conversion of dethiobiotin (DTB) to biotin by the insertion of a sulfur atom into dethiobiotin via a radical-based mechanism. This chain is Biotin synthase 2, found in Paracoccus denitrificans (strain Pd 1222).